The primary structure comprises 190 residues: ADP-ribosylation factor-like protein 6 (190 aa).

A lipid anchor (N-myristoyl glycine) is attached at Gly-2. Residues 24-31 (GLDNSGKT), Thr-50, 69-73 (DMAGQ), Gly-72, 130-133 (NKMD), and Ala-164 each bind GTP. 2 residues coordinate Mg(2+): Thr-31 and Thr-50.

This sequence belongs to the small GTPase superfamily. Arf family.

The protein resides in the cytoplasm. This Caenorhabditis briggsae protein is ADP-ribosylation factor-like protein 6.